Reading from the N-terminus, the 471-residue chain is NALCN channel auxiliary factor 2 (471 aa).

The chain crosses the membrane as a helical span at residues 47–67 (LASLLFFTVLLADHLWLCAGA). Positions 76–115 (SAMRPPWGAGRERQPVPPRAVLPPPPPSPGEPSASSGTCG) are disordered. Residues 90–105 (PVPPRAVLPPPPPSPG) are compositionally biased toward pro residues. An N-linked (GlcNAc...) asparagine glycan is attached at Asn-120. 2 disordered regions span residues 158 to 178 (EPTTPAPPLRPPDSPSRAPEF) and 399 to 424 (HYHPRHEPPSRVSNKPSLLPVSGGSR). Over residues 161–171 (TPAPPLRPPDS) the composition is skewed to pro residues. Residues 432-452 (LCVLVLILLHTVVSFSSSQSG) traverse the membrane as a helical segment.

This sequence belongs to the NALF family.

It localises to the membrane. Probable component of the NALCN channel complex, a channel that regulates the resting membrane potential and controls neuronal excitability. The chain is NALCN channel auxiliary factor 2 (Nalf2) from Mus musculus (Mouse).